Reading from the N-terminus, the 306-residue chain is Beta-lactamase (306 aa).

A signal peptide (tat-type signal) is located at residues 1–34 (MDRTTARPNRRAVLATGVGAALAATAAAAGPAHA). The active-site Acyl-ester intermediate is the serine 82. A substrate-binding site is contributed by 250–252 (KTG).

It belongs to the class-A beta-lactamase family. Post-translationally, predicted to be exported by the Tat system. The position of the signal peptide cleavage has not been experimentally proven.

It carries out the reaction a beta-lactam + H2O = a substituted beta-amino acid. This is Beta-lactamase (blaF) from Streptomyces fradiae (Streptomyces roseoflavus).